The sequence spans 127 residues: Major sperm protein 49 (127 aa).

Ala2 bears the N-acetylalanine mark. One can recognise an MSP domain in the interval 9–126 (DIQTQPGTKI…RRKNLPIEYN (118 aa)).

In terms of tissue distribution, sperm.

The protein resides in the cell projection. Its subcellular location is the pseudopodium. It localises to the cytoplasm. The protein localises to the cytoskeleton. Central component in molecular interactions underlying sperm crawling. Forms an extensive filament system that extends from sperm villipoda, along the leading edge of the pseudopod. This Caenorhabditis elegans protein is Major sperm protein 49 (msp-49).